Reading from the N-terminus, the 310-residue chain is E3 ubiquitin-protein ligase AIP2 (310 aa).

An RING-type; atypical zinc finger spans residues 230-271 (CCICKENLVIGDKMQELPCKHTFHPPCLKPWLDEHNSCPICR). A coiled-coil region spans residues 276–306 (TDDQKYENWKEREKEAEEERKGAENAVRGGE). Positions 285-298 (KEREKEAEEERKGA) are enriched in basic and acidic residues. The segment at 285–310 (KEREKEAEEERKGAENAVRGGEYMYV) is disordered.

In terms of assembly, interacts with ABI3 (via C-terminus). Post-translationally, auto-ubiquitinated. Highly expressed in leaves and at lower levels in flowers and seeds.

It localises to the nucleus. The protein resides in the cytoplasm. It carries out the reaction S-ubiquitinyl-[E2 ubiquitin-conjugating enzyme]-L-cysteine + [acceptor protein]-L-lysine = [E2 ubiquitin-conjugating enzyme]-L-cysteine + N(6)-ubiquitinyl-[acceptor protein]-L-lysine.. The protein operates within protein modification; protein ubiquitination. Functionally, E3 ubiquitin-protein ligase that acts as a negative regulator of abscisic acid (ABA) signaling. Mediates ubiquitination and subsequent proteasomal degradation of the transcription factor ABI3. In Arabidopsis thaliana (Mouse-ear cress), this protein is E3 ubiquitin-protein ligase AIP2 (AIP2).